Reading from the N-terminus, the 45-residue chain is C-phycocyanin beta subunit (45 aa).

Belongs to the phycobiliprotein family. As to quaternary structure, heterodimer of an alpha and a beta subunit. The hererodimer further assembles into trimers and the trimers into hexamers. Post-translationally, contains two covalently linked bilin chromophores.

The protein resides in the cellular thylakoid membrane. Functionally, light-harvesting photosynthetic bile pigment-protein from the phycobiliprotein complex (phycobilisome, PBS). Phycocyanin is the major phycobiliprotein in the PBS rod. The protein is C-phycocyanin beta subunit (cpcB) of Limnospira fusiformis (Arthrospira fusiformis).